We begin with the raw amino-acid sequence, 398 residues long: Proteasome-activating nucleotidase (398 aa).

The stretch at 18 to 59 (IMYLKKRIRQLELQVRTLEADKERLERELSRLRMEMSRLRQP) forms a coiled coil. ATP-binding positions include 183 to 188 (GCGKTL) and His322. Positions 396–398 (MYG) are docks into pockets in the proteasome alpha-ring to cause gate opening.

This sequence belongs to the AAA ATPase family. As to quaternary structure, homohexamer. The hexameric complex has a two-ring architecture resembling a top hat that caps the 20S proteasome core at one or both ends. Upon ATP-binding, the C-terminus of PAN interacts with the alpha-rings of the proteasome core by binding to the intersubunit pockets.

It localises to the cytoplasm. Functionally, ATPase which is responsible for recognizing, binding, unfolding and translocation of substrate proteins into the archaeal 20S proteasome core particle. Is essential for opening the gate of the 20S proteasome via an interaction with its C-terminus, thereby allowing substrate entry and access to the site of proteolysis. Thus, the C-termini of the proteasomal ATPase function like a 'key in a lock' to induce gate opening and therefore regulate proteolysis. Unfolding activity requires energy from ATP hydrolysis, whereas ATP binding alone promotes ATPase-20S proteasome association which triggers gate opening, and supports translocation of unfolded substrates. The polypeptide is Proteasome-activating nucleotidase (Thermococcus onnurineus (strain NA1)).